A 1121-amino-acid chain; its full sequence is Cilia- and flagella-associated protein 70 (1121 aa).

Positions 410–428 (NLKEDKPVKEKDIDGRPRP) are enriched in basic and acidic residues. The segment at 410–457 (NLKEDKPVKEKDIDGRPRPGDVQAPSIKSQSSDTPLEGEPPLSHNPEG) is disordered. 3 TPR repeats span residues 635–668 (SEQLQLFAFEAEVNENFEMAAAYYKERLVREPQN), 669–702 (LDHWLDYGAFCLLTEDNIKAQECFQKALSLNQSH), and 704–736 (HSLLLCGVLAVLLENYEQAEIFFEDATCLEPTN). Disordered stretches follow at residues 778–802 (KQKSTGVEDTEERGKRESSLGPWGI) and 836–858 (QSDSQEPILTTQTWDPSISQKPS). TPR repeat units lie at residues 929–962 (CEYYLVLAQTHILKKNFAKAEEYLQQAAQMDYLN), 963–996 (PNVWGLKGHLYFLSGNHSEAKACYERTISFVVDA), 1000–1033 (HFIFLRLGLIYLEEKEYEKAKKTYMQACKRSPSC), 1035–1066 (TWLGLGIACYRLEELTEAEDALSEANALNNYN), and 1068–1100 (EVWAYLALVCLKVGRQLEAEQAYKYMIKLKLKD).

It belongs to the CFAP70 family. As to expression, expressed in testis.

It localises to the cell projection. The protein resides in the cilium. It is found in the flagellum. The protein localises to the cytoplasm. Its subcellular location is the cytoskeleton. It localises to the flagellum basal body. The protein resides in the cilium axoneme. Its function is as follows. Axoneme-binding protein that plays a role in the regulation of ciliary motility and cilium length. In Homo sapiens (Human), this protein is Cilia- and flagella-associated protein 70.